The following is a 305-amino-acid chain: Methionyl-tRNA formyltransferase (305 aa).

Position 110-113 (110-113 (SLLP)) interacts with (6S)-5,6,7,8-tetrahydrofolate.

Belongs to the Fmt family.

It carries out the reaction L-methionyl-tRNA(fMet) + (6R)-10-formyltetrahydrofolate = N-formyl-L-methionyl-tRNA(fMet) + (6S)-5,6,7,8-tetrahydrofolate + H(+). In terms of biological role, attaches a formyl group to the free amino group of methionyl-tRNA(fMet). The formyl group appears to play a dual role in the initiator identity of N-formylmethionyl-tRNA by promoting its recognition by IF2 and preventing the misappropriation of this tRNA by the elongation apparatus. This chain is Methionyl-tRNA formyltransferase, found in Ureaplasma parvum serovar 3 (strain ATCC 700970).